Here is a 295-residue protein sequence, read N- to C-terminus: Regucalcin (295 aa).

E18 is an a divalent metal cation binding site. Residues R100, N102, and D120 each coordinate substrate. A divalent metal cation contacts are provided by N150 and D200. The Proton donor/acceptor role is filled by D200.

This sequence belongs to the SMP-30/CGR1 family. It depends on Zn(2+) as a cofactor. The cofactor is Mn(2+). Ca(2+) serves as cofactor. Mg(2+) is required as a cofactor.

It is found in the cytoplasm. It carries out the reaction D-glucono-1,5-lactone + H2O = D-gluconate + H(+). It participates in cofactor biosynthesis; L-ascorbate biosynthesis via UDP-alpha-D-glucuronate pathway; L-ascorbate from UDP-alpha-D-glucuronate: step 3/4. Its function is as follows. Gluconolactonase with low activity towards other sugar lactones, including gulonolactone and galactonolactone. Catalyzes a key step in ascorbic acid (vitamin C) biosynthesis. Can also hydrolyze diisopropyl phosphorofluoridate and phenylacetate (in vitro). Calcium-binding protein. Modulates Ca(2+) signaling, and Ca(2+)-dependent cellular processes and enzyme activities. The polypeptide is Regucalcin (Danio rerio (Zebrafish)).